The sequence spans 158 residues: Ribosome maturation factor RimP (158 aa).

Belongs to the RimP family.

The protein localises to the cytoplasm. Its function is as follows. Required for maturation of 30S ribosomal subunits. The protein is Ribosome maturation factor RimP of Deinococcus radiodurans (strain ATCC 13939 / DSM 20539 / JCM 16871 / CCUG 27074 / LMG 4051 / NBRC 15346 / NCIMB 9279 / VKM B-1422 / R1).